The sequence spans 203 residues: Galactoside O-acetyltransferase (203 aa).

Positions 17, 71, 85, and 93 each coordinate substrate. Asn-85 lines the acetyl-CoA pocket. His-115 (proton donor/acceptor) is an active-site residue. Residues Ser-142, Ala-160, Thr-165–Lys-166, Arg-180, and Arg-183 each bind acetyl-CoA.

The protein belongs to the transferase hexapeptide repeat family. Homotrimer. In terms of processing, the N-terminus of this protein is heterogeneous because the initiator methionine is only partially cleaved.

The protein resides in the cytoplasm. The catalysed reaction is a beta-D-galactoside + acetyl-CoA = a 6-acetyl-beta-D-galactoside + CoA. In terms of biological role, catalyzes the CoA-dependent transfer of an acetyl group to the 6-O-methyl position of a range of galactosides, glucosides, and lactosides. May assist cellular detoxification by acetylating non-metabolizable pyranosides, thereby preventing their reentry into the cell. The chain is Galactoside O-acetyltransferase (lacA) from Escherichia coli (strain K12).